The following is a 582-amino-acid chain: Insulin-like growth factor 2 mRNA-binding protein 3 (582 aa).

RRM domains lie at 2–75 (NKLY…HSVP) and 81–156 (CKLQ…YIPD). A disordered region spans residues 164 to 190 (PAVGGRRGFNPRGPPRQGSPSLGARPK). At Ser182 the chain carries Phosphoserine. KH domains are found at residues 194–259 (DVPL…CRNI), 275–342 (EIPL…EEEI), 408–473 (SETV…QGRI), and 490–556 (KLEA…QRKI). Residues 562–582 (QVRRQQQPKPSAAGPPVARRK) form a disordered region.

The protein belongs to the RRM IMP/VICKZ family. Homodimer and multimer.

Its subcellular location is the cytoplasm. It is found in the nucleus. The protein localises to the P-body. It localises to the stress granule. Functionally, RNA-binding factor that may recruit target transcripts to cytoplasmic protein-RNA complexes (mRNPs). This transcript 'caging' into mRNPs allows mRNA transport and transient storage. It also modulates the rate and location at which target transcripts encounter the translational apparatus and shields them from endonuclease attacks or microRNA-mediated degradation. Preferentially binds to N6-methyladenosine (m6A)-containing mRNAs and increases their stability. Involved in neuronal crest migration. The polypeptide is Insulin-like growth factor 2 mRNA-binding protein 3 (igf2bp3) (Danio rerio (Zebrafish)).